Here is a 118-residue protein sequence, read N- to C-terminus: Vesicle-associated membrane protein 1 (118 aa).

Residues 1 to 15 (MSAPAQPPTEGAEGA) show a composition bias toward low complexity. The interval 1–36 (MSAPAQPPTEGAEGAAPGGGPPGPPPNMTSNRRLQQ) is disordered. Topologically, residues 1 to 96 (MSAPAQPPTE…KRKYWWKNCK (96 aa)) are cytoplasmic. Positions 33-93 (RLQQTQAQVE…AKLKRKYWWK (61 aa)) constitute a v-SNARE coiled-coil homology domain. Residue Ser-63 is modified to Phosphoserine. A helical; Anchor for type IV membrane protein transmembrane segment spans residues 97–116 (MMIMLGAICAIIVVVIVIYF). The Vesicular portion of the chain corresponds to 117-118 (FA).

It belongs to the synaptobrevin family. In terms of assembly, interacts with VAPA and VAPB.

It localises to the cytoplasmic vesicle. It is found in the secretory vesicle. The protein localises to the synaptic vesicle membrane. The protein resides in the synapse. Its subcellular location is the synaptosome. It localises to the cytoplasmic vesicle membrane. Involved in the targeting and/or fusion of transport vesicles to their target membrane. The protein is Vesicle-associated membrane protein 1 (VAMP1) of Bos taurus (Bovine).